The sequence spans 918 residues: MSQFKRQRINPLPGGRNFSGTASTSLLGPPPGLLTPPVATELSQNARHLQGGEKQRVFTGIVTSLHDYFGVVDEEVFFQLSVVKGRLPQLGEKVLVKAAYNPGQAVPWNAVKVQTLSNQPLLKSPAPPLLHVAALGQKQGILGAQPQLIFQPHRIPPLFPQKPLSLFQTSHTLHLSHLNRFPARGPHGRLDQGQSDDYDSKKRKQRAGGEPWGAKKPRHDLPPYRVHLTPYTVDSPICDFLELQRRYRSLLVPSDFLSVHLSWLSAFPLSQPFSLHHPSRIQVSSEKEAAPDAGAEPIPADSDPAYSSKVLLLSSPGLEELYRCCMLFVDDMAEPRETPEHPLKQIKFLLGRKEEEAVLVGGEWSPSLDGLDPQADPQVLVRTAIRCAQAQTGIDLSGCTKWWRFAEFQYLQPGPPRRLQTVVVYLPDVWTIMPTLEEWEALCQQKAAEAAPPTQEAPGETEPTEQAPDALEQAADTSRQNAETPEATTQQETDTDLPEAPPPPLEPAVIARPGCVNLSLHGIVEDRRPKERISFEVMVLAELFLEMLQRDFGYRVYKMLLSLPEKVVSPPEPEKEEAAKEEEAIKEEVVKEPKDEAQNEGPATESEAPLKEDGLLPKPPSSGGEEEEKPRGEASEDLCEMALDPELLLLRDDGEEEFAGAKLEDSEVRSVASNQSEMEFSSLQDMPKELDPSAVLPLDCLLAFVFFDANWCGYLHRRDLERILLTLGIRLSAEQAKQLVSRVVTQNICQYRSLQYSRQEGLDGGLPEEVLFGNLDLLPPSGKSTKPGAAPTEHKALVSHNGSLINVGSLLQRAEQQDSGRLYLENRIHTLELKLEESHNRFSATEVTNKTLAAEMQELRARLAEAEETARTAERQKSQLQRLLQELRRRLTPLQLEIQRVVEKADSWVEKEEPAPSN.

Residues 1–35 (MSQFKRQRINPLPGGRNFSGTASTSLLGPPPGLLT) form a disordered region. At Thr35 the chain carries Phosphothreonine. Lys112 carries the post-translational modification N6-acetyllysine; by KAT8. Lys123 carries the post-translational modification N6-methyllysine. Ser124 carries the phosphoserine modification. 3 disordered regions span residues 179-219 (NRFP…KPRH), 446-510 (KAAE…PAVI), and 568-637 (VSPP…ASED). Arg180 carries the post-translational modification Omega-N-methylarginine. N6-acetyllysine; by KAT8 is present on Lys215. Low complexity-rich tracts occupy residues 447-468 (AAEA…EQAP) and 482-492 (AETPEATTQQE). Thr454 bears the Phosphothreonine; by ATM, ATR and CK2 mark. Phosphothreonine is present on Thr484. Phosphoserine is present on Ser569. Basic and acidic residues predominate over residues 572-597 (EPEKEEAAKEEEAIKEEVVKEPKDEA). Residue Lys586 forms a Glycyl lysine isopeptide (Lys-Gly) (interchain with G-Cter in SUMO2 and SUMO3); alternate linkage. Residue Lys586 forms a Glycyl lysine isopeptide (Lys-Gly) (interchain with G-Cter in SUMO2); alternate linkage. The interaction with MCC stretch occupies residues 605–665 (ESEAPLKEDG…EEFAGAKLED (61 aa)). Phosphoserine occurs at positions 622, 670, 673, 676, 682, and 803. The segment at 699-918 (DCLLAFVFFD…VEKEEPAPSN (220 aa)) is interaction with NR1D1. Residues 824–904 (LENRIHTLEL…QLEIQRVVEK (81 aa)) adopt a coiled-coil conformation. Thr892 is subject to Phosphothreonine.

As to quaternary structure, component of the DBIRD complex. Interacts with ZNF326/ZIRD; the interaction is direct. Interacts (via N-terminus) with SIRT1, which inhibits the deacetylation of substrates. Interacts (via N-terminus) with SUV39H1; this interaction abolishes the interaction with SIRT1. Component of a nuclear receptor-mediated transcription complex composed of at least ZNF335, CCAR2 and EMSY; the complex stimulates the transcription of nuclear receptor target genes such as SOX9 and HOXA1. Within the complex interacts with EMSY and interacts with ZNF335 (via C-terminus). Components of this complex may associate with components of a histone methylation complex to form a complex at least composed of ZNF335, HCFC1, CCAR2, EMSY, MKI67, RBBP5, ASH2L and WDR5. Within this complex, interacts with ASH2L. Interacts with NR1D1. Interacts (via N-terminus) with ESR1 and ESR2. Interacts (via N-terminus) with HDAC3 (via C-terminus). Interacts with HDAC1 and MED2F. Interacts with MCC. Interacts (via N-terminus) with NR1H2 and NR1H3 in a ligand-independent manner. Interacts with CSNK2A1. Interacts (via N-terminus) with p53/TP53. Interacts (via N-terminus) with BRCA1 (via the BRCT domains). Interacts (via N-terminus) with CHEK2 (via protein kinase domain). Interacts with PSEM3. Interacts (via N-terminus) with PSIA3 and SENP1. The sumoylated form shows a preferential interaction with SIRT1 as compared to its unmodified form. Interacts with CECR2; may form part of the CERF-1 and/or CEF-5 ISWI chromatin remodeling complexes in embryonic stem cells. ATM/ATR-mediated phosphorylation at Thr-454 upon DNA damage promotes binding to SIRT1. Phosphorylation at Thr-454 promotes its sumoylation by switching the binding partner of CCAR2 from SENP1 to PIAS3. In terms of processing, acetylation at Lys-112 and Lys-215 by KAT8 prevents inhibitory binding to SIRT1 and increases its deacetylase activity. Post-translationally, genotoxic stress induces its sumoylation and sumoylation promotes the SIRT1-CCAR2 interaction which in turn inhibits SIRT1-mediated deacetylation of p53/TP53. Sumoylation leads to transcriptional activation of p53/TP53 by sequestering SIRT1 from p53/TP53. Desumoylated by SENP1.

The protein resides in the nucleus. It is found in the cytoplasm. Its subcellular location is the cytoskeleton. It localises to the spindle. Functionally, core component of the DBIRD complex, a multiprotein complex that acts at the interface between core mRNP particles and RNA polymerase II (RNAPII) and integrates transcript elongation with the regulation of alternative splicing: the DBIRD complex affects local transcript elongation rates and alternative splicing of a large set of exons embedded in (A + T)-rich DNA regions. Inhibits SIRT1 deacetylase activity leading to increasing levels of p53/TP53 acetylation and p53-mediated apoptosis. Inhibits SUV39H1 methyltransferase activity. Mediates ligand-dependent transcriptional activation by nuclear hormone receptors. Plays a critical role in maintaining genomic stability and cellular integrity following UV-induced genotoxic stress. Regulates the circadian expression of the core clock components NR1D1 and BMAL1. Enhances the transcriptional repressor activity of NR1D1 through stabilization of NR1D1 protein levels by preventing its ubiquitination and subsequent degradation. Represses the ligand-dependent transcriptional activation function of ESR2. Acts as a regulator of PCK1 expression and gluconeogenesis by a mechanism that involves, at least in part, both NR1D1 and SIRT1. Negatively regulates the deacetylase activity of HDAC3 and can alter its subcellular localization. Positively regulates the beta-catenin pathway (canonical Wnt signaling pathway) and is required for MCC-mediated repression of the beta-catenin pathway. Represses ligand-dependent transcriptional activation function of NR1H2 and NR1H3 and inhibits the interaction of SIRT1 with NR1H3. Plays an important role in tumor suppression through p53/TP53 regulation; stabilizes p53/TP53 by affecting its interaction with ubiquitin ligase MDM2. Represses the transcriptional activator activity of BRCA1. Inhibits SIRT1 in a CHEK2 and PSEM3-dependent manner and inhibits the activity of CHEK2 in vitro. The chain is Cell cycle and apoptosis regulator protein 2 (CCAR2) from Pongo abelii (Sumatran orangutan).